Here is an 88-residue protein sequence, read N- to C-terminus: Apolipoprotein C-I (88 aa).

The signal sequence occupies residues 1 to 26 (MRLFLSLPVLVVVLAMVLEGPAPTQA).

It belongs to the apolipoprotein C1 family.

The protein localises to the secreted. Functionally, inhibitor of lipoprotein binding to the low density lipoprotein (LDL) receptor, LDL receptor-related protein, and very low density lipoprotein (VLDL) receptor. Associates with high density lipoproteins (HDL) and the triacylglycerol-rich lipoproteins in the plasma and makes up about 10% of the protein of the VLDL and 2% of that of HDL. Appears to interfere directly with fatty acid uptake and is also the major plasma inhibitor of cholesteryl ester transfer protein (CETP). Binds free fatty acids and reduces their intracellular esterification. Modulates the interaction of APOE with beta-migrating VLDL and inhibits binding of beta-VLDL to the LDL receptor-related protein. The protein is Apolipoprotein C-I (APOC1) of Phoca vitulina (Harbor seal).